The sequence spans 225 residues: Cytidylate kinase (225 aa).

12–20 (GPSGAGKGT) contributes to the ATP binding site.

Belongs to the cytidylate kinase family. Type 1 subfamily.

The protein localises to the cytoplasm. The enzyme catalyses CMP + ATP = CDP + ADP. It carries out the reaction dCMP + ATP = dCDP + ADP. The chain is Cytidylate kinase from Edwardsiella ictaluri (strain 93-146).